Consider the following 202-residue polypeptide: NAD(P)H dehydrogenase (quinone) 2 (202 aa).

Residues 4–190 (VLVLYYSSYG…AGAFHQGEIV (187 aa)) enclose the Flavodoxin-like domain. FMN-binding positions include 10–15 (SSYGHI) and 78–80 (TRF). Position 12 (Tyr-12) interacts with NAD(+). Substrate is bound at residue Trp-98. Residues 113–119 (STGTQHG) and His-134 each bind FMN.

This sequence belongs to the WrbA family. Requires FMN as cofactor.

The enzyme catalyses a quinone + NADH + H(+) = a quinol + NAD(+). The catalysed reaction is a quinone + NADPH + H(+) = a quinol + NADP(+). The sequence is that of NAD(P)H dehydrogenase (quinone) 2 from Rhizobium meliloti (strain 1021) (Ensifer meliloti).